The following is a 156-amino-acid chain: uncharacterized protein (156 aa).

Residues 1 to 22 (MFGKVSSLLVFASFLIIQGAFA) form the signal peptide. The GPI-anchor amidated serine moiety is linked to residue Ser129. Residues 130–156 (GSPVRFSKSSLLIVSLLSIAAFAALVL) constitute a propeptide, removed in mature form.

The protein localises to the cell membrane. This is an uncharacterized protein from Schizosaccharomyces pombe (strain 972 / ATCC 24843) (Fission yeast).